Here is a 193-residue protein sequence, read N- to C-terminus: Guanylate kinase (193 aa).

The region spanning 8–188 (GRLVVLVGPS…ACEQLVSLFV (181 aa)) is the Guanylate kinase-like domain. 15 to 22 (GPSAVGKS) lines the ATP pocket.

It belongs to the guanylate kinase family.

It is found in the cytoplasm. The catalysed reaction is GMP + ATP = GDP + ADP. In terms of biological role, essential for recycling GMP and indirectly, cGMP. The protein is Guanylate kinase of Nocardia farcinica (strain IFM 10152).